We begin with the raw amino-acid sequence, 315 residues long: ADP-L-glycero-D-manno-heptose-6-epimerase (315 aa).

Residues 10 to 11, 31 to 32, Lys-38, Lys-53, 76 to 80, and Asn-93 each bind NADP(+); these read FI, DD, and QGACS. Tyr-140 functions as the Proton acceptor in the catalytic mechanism. Lys-144 lines the NADP(+) pocket. Asn-169 is a binding site for substrate. The NADP(+) site is built by Val-170 and Lys-178. Lys-178 acts as the Proton acceptor in catalysis. Residues Ser-180, His-187, 201-204, Arg-214, and Tyr-278 contribute to the substrate site; that span reads FEGC.

The protein belongs to the NAD(P)-dependent epimerase/dehydratase family. HldD subfamily. As to quaternary structure, homopentamer. NADP(+) is required as a cofactor.

It carries out the reaction ADP-D-glycero-beta-D-manno-heptose = ADP-L-glycero-beta-D-manno-heptose. Its pathway is nucleotide-sugar biosynthesis; ADP-L-glycero-beta-D-manno-heptose biosynthesis; ADP-L-glycero-beta-D-manno-heptose from D-glycero-beta-D-manno-heptose 7-phosphate: step 4/4. In terms of biological role, catalyzes the interconversion between ADP-D-glycero-beta-D-manno-heptose and ADP-L-glycero-beta-D-manno-heptose via an epimerization at carbon 6 of the heptose. The protein is ADP-L-glycero-D-manno-heptose-6-epimerase of Syntrophotalea carbinolica (strain DSM 2380 / NBRC 103641 / GraBd1) (Pelobacter carbinolicus).